A 749-amino-acid polypeptide reads, in one-letter code: MSFIDPYQHIIVEHHYSHKFTVVVLRATKVTKGTFGDMLDTPDPYVELFISSTPDSRKRTRHFNNDINPVWNETFEFILDPNQENILEITLMDANYVMDETLGTTTFPISSMKVGEKKQVPFIFNQVTEMILEMSLEVCSSPDLRFSMALCDQEKAFRQQRKENIKENMKKLLGPKNSEGLHSTRDVPVVAILGSGGGFRAMVGFSGVMKALYESGILDCATYIAGLSGSTWYMSTLYSHPDFPEKGPEEINKELMKNVSHNPLLLLTPQKIKRYVESLWRKKSSGQPVTFTDIFGMLIGETLIHNRMNTTLSSLKEKVNTGQCPLPLFTCLHVKPDVSELMFADWVEFSPFEIGMAKYGTFMAPDLFGSKFFMGTVVKKYEENPLHFLMGVWGSAFSILFNRVLGVSGSQSKGSTMEEELENITAKHIVSNDSSDSDDESQGPKGTEHEEAEREYQNDNQASWVQRMLMALVSDSALFNTREGRAGKVHNFMLGLNLNTSYPMSPLRDFTMQESLDEDELDAAVADPDEFEQIYEPLDVKSKKIHVVDSGLTFNLPYPLILRPQRGVDLIISFDFSARPSDSSPPFKELLLAEKWAKMNKLPFPKIDPYVFDREGLKECYVFKPKNPDVEKDCPTIIHFVLANINFRKYKAPGVPRETNEEKEIADFDIFDDPESPFSTFNFQYPNQAFKRLHDLMYFNTLNNIDVIKNAIVESIEYRRQNPSRCSVSLSSVEARRFFNKEFLSKPTA.

A phospholipid binding region spans residues 1-178 (MSFIDPYQHI…MKKLLGPKNS (178 aa)). S2 carries the phosphoserine modification. The 117-residue stretch at 6 to 122 (PYQHIIVEHH…KVGEKKQVPF (117 aa)) folds into the C2 domain. Ca(2+)-binding residues include D40, T41, D43, N65, D93, A94, and N95. One can recognise a PLA2c domain in the interval 140 to 740 (SSPDLRFSMA…SSVEARRFFN (601 aa)). S228 functions as the Nucleophile in the catalytic mechanism. T268 bears the Phosphothreonine mark. A disordered region spans residues 426–458 (AKHIVSNDSSDSDDESQGPKGTEHEEAEREYQN). Phosphoserine is present on residues S434, S435, and S437. Residues 446 to 457 (GTEHEEAEREYQ) are compositionally biased toward basic and acidic residues. S505 carries the phosphoserine; by MAPK modification. Phosphoserine is present on S515. K541 participates in a covalent cross-link: Glycyl lysine isopeptide (Lys-Gly) (interchain with G-Cter in SUMO2). The active-site Proton acceptor is the D549. A Glycyl lysine isopeptide (Lys-Gly) (interchain with G-Cter in SUMO2) cross-link involves residue K606. S727 and S729 each carry phosphoserine.

As to quaternary structure, interacts with KAT5. Post-translationally, phosphorylated at both Ser-505 and Ser-727 in response to mitogenic stimuli. As to expression, detected in granulosa cells after stimulation with chorionic gonadotropin (at protein level).

The protein resides in the cytoplasm. It is found in the golgi apparatus membrane. The protein localises to the nucleus envelope. The catalysed reaction is a 1,2-diacyl-sn-glycero-3-phosphocholine + H2O = a 1-acyl-sn-glycero-3-phosphocholine + a fatty acid + H(+). It carries out the reaction a 1-O-alkyl-2-acyl-sn-glycero-3-phosphocholine + H2O = a 1-O-alkyl-sn-glycero-3-phosphocholine + a fatty acid + H(+). It catalyses the reaction a 1-acyl-sn-glycero-3-phosphocholine + H2O = sn-glycerol 3-phosphocholine + a fatty acid + H(+). The enzyme catalyses 1-hexadecanoyl-2-(5Z,8Z,11Z,14Z-eicosatetraenoyl)-sn-glycero-3-phosphocholine + H2O = 1-hexadecanoyl-sn-glycero-3-phosphocholine + (5Z,8Z,11Z,14Z)-eicosatetraenoate + H(+). The catalysed reaction is 1,2-di-(5Z,8Z,11Z,14Z-eicosatetraenoyl)-sn-glycero-3-phosphocholine + H2O = 1-(5Z,8Z,11Z,14Z-eicosatetraenoyl)-sn-glycero-3-phosphocholine + (5Z,8Z,11Z,14Z)-eicosatetraenoate + H(+). It carries out the reaction 1-octadecanoyl-2-(5Z,8Z,11Z,14Z-eicosatetraenoyl)-sn-glycero-3-phosphocholine + H2O = 1-octadecanoyl-sn-glycero-3-phosphocholine + (5Z,8Z,11Z,14Z)-eicosatetraenoate + H(+). It catalyses the reaction 1-hexadecanoyl-2-(9Z,12Z-octadecadienoyl)-sn-glycero-3-phosphocholine + H2O = (9Z,12Z)-octadecadienoate + 1-hexadecanoyl-sn-glycero-3-phosphocholine + H(+). The enzyme catalyses 1-octadecanoyl-2-(9Z,12Z,15Z-octadecatrienoyl)-sn-glycero-3-phosphocholine + H2O = (9Z,12Z,15Z)-octadecatrienoate + 1-octadecanoyl-sn-glycero-3-phosphocholine + H(+). The catalysed reaction is 1-(5Z,8Z,11Z,14Z-eicosatetraenoyl)-2-hexadecanoyl-sn-glycero-3-phosphocholine + H2O = 1-(5Z,8Z,11Z,14Z-eicosatetraenoyl)-sn-glycero-3-phosphocholine + hexadecanoate + H(+). It carries out the reaction 1-O-hexadecyl-2-(5Z,8Z,11Z,14Z)-eicosatetraenoyl-sn-glycero-3-phosphocholine + H2O = 1-O-hexadecyl-sn-glycero-3-phosphocholine + (5Z,8Z,11Z,14Z)-eicosatetraenoate + H(+). It catalyses the reaction 1,2-di-(9Z-octadecenoyl)-sn-glycero-3-phospho-(1'-sn-glycerol) + H2O = 1-(9Z-octadecenoyl)-sn-glycero-3-phospho-(1'-sn-glycerol) + (9Z)-octadecenoate + H(+). The enzyme catalyses 1-octadecanoyl-2-(5Z,8Z,11Z,14Z-eicosatetraenoyl)-sn-glycero-3-phosphate + H2O = 1-octadecanoyl-sn-glycero-3-phosphate + (5Z,8Z,11Z,14Z)-eicosatetraenoate + H(+). The catalysed reaction is 1-hexadecanoyl-sn-glycero-3-phosphocholine + H2O = sn-glycerol 3-phosphocholine + hexadecanoate + H(+). It carries out the reaction 2-(prostaglandin E2)-sn-glycero-3-phosphoethanolamine + H2O = sn-glycero-3-phosphoethanolamine + prostaglandin E2 + H(+). It catalyses the reaction 2-[(15S)-hydroxy-(5Z,8Z,11Z,13E)-eicosatetraenoyl]-sn-glycero-3-phosphocholine + H2O = (15S)-hydroxy-(5Z,8Z,11Z,13E)-eicosatetraenoate + sn-glycerol 3-phosphocholine + H(+). The enzyme catalyses 2-[(15R)-hydroxy-(5Z,8Z,11Z,13E)-eicosatetraenoyl]-sn-glycero-3-phosphocholine + H2O = (15R)-hydroxy-(5Z,8Z,11Z,13E)-eicosatetraenoate + sn-glycerol 3-phosphocholine + H(+). The catalysed reaction is 2-(prostaglandin E2)-sn-glycero-3-phosphocholine + H2O = prostaglandin E2 + sn-glycerol 3-phosphocholine + H(+). It carries out the reaction 2-[(11R)-hydroxy-(5Z,8Z,12E,14Z)-eicosatetraenoyl]-sn-glycero-3-phosphocholine + H2O = (11R)-hydroxy-(5Z,8Z,12E,14Z)-eicosatetraenoate + sn-glycerol 3-phosphocholine + H(+). It catalyses the reaction 1-(5Z,8Z,11Z,14Z-eicosatetraenoyl)-2-O-hexadecyl-sn-glycero-3-phosphocholine + H2O = 2-O-hexadecyl-sn-glycero-3-phosphocholine + (5Z,8Z,11Z,14Z)-eicosatetraenoate + H(+). The enzyme catalyses 1-octadecanoyl-2-(5Z,8Z,11Z,14Z-eicosatetraenoyl)-sn-glycero-3-phosphocholine + glycerol = 1-(5Z,8Z,11Z,14Z-eicosatetraenoyl)-glycerol + 1-octadecanoyl-sn-glycero-3-phosphocholine. The catalysed reaction is 1-octadecanoyl-2-(9Z,12Z,15Z-octadecatrienoyl)-sn-glycero-3-phosphocholine + glycerol = 1-(9Z,12Z,15Z-octadecatrienoyl)-glycerol + 1-octadecanoyl-sn-glycero-3-phosphocholine. It participates in membrane lipid metabolism; glycerophospholipid metabolism. Its pathway is lipid metabolism; arachidonate metabolism. The protein operates within lipid metabolism; prostaglandin biosynthesis. It functions in the pathway lipid metabolism; leukotriene B4 biosynthesis. Activated by cytosolic calcium, which is necessary for binding to membrane lipids. Activated by phosphorylation in response to mitogenic stimuli. Functionally, has primarily calcium-dependent phospholipase and lysophospholipase activities, with a major role in membrane lipid remodeling and biosynthesis of lipid mediators of the inflammatory response. Plays an important role in embryo implantation and parturition through its ability to trigger prostanoid production. Preferentially hydrolyzes the ester bond of the fatty acyl group attached at sn-2 position of phospholipids (phospholipase A2 activity). Selectively hydrolyzes sn-2 arachidonoyl group from membrane phospholipids, providing the precursor for eicosanoid biosynthesis via the cyclooxygenase pathway. In an alternative pathway of eicosanoid biosynthesis, hydrolyzes sn-2 fatty acyl chain of eicosanoid lysophopholipids to release free bioactive eicosanoids. Hydrolyzes the ester bond of the fatty acyl group attached at sn-1 position of phospholipids (phospholipase A1 activity) only if an ether linkage rather than an ester linkage is present at the sn-2 position. This hydrolysis is not stereospecific. Has calcium-independent phospholipase A2 and lysophospholipase activities in the presence of phosphoinositides. Has O-acyltransferase activity. Catalyzes the transfer of fatty acyl chains from phospholipids to a primary hydroxyl group of glycerol (sn-1 or sn-3), potentially contributing to monoacylglycerol synthesis. This Bos taurus (Bovine) protein is Cytosolic phospholipase A2 (PLA2G4A).